Here is a 55-residue protein sequence, read N- to C-terminus: MAKGGREKIKLQSTAGTGHFYTTDKNKKTTPEKMLIMKFDPKARKHVEYKEIKLK.

Basic and acidic residues predominate over residues methionine 1 to lysine 10. The disordered stretch occupies residues methionine 1 to lysine 27.

This sequence belongs to the bacterial ribosomal protein bL33 family.

This chain is Large ribosomal subunit protein bL33, found in Polaromonas naphthalenivorans (strain CJ2).